The sequence spans 298 residues: Mitochondrial nicotinamide adenine dinucleotide transporter SLC25A51 (298 aa).

Over residues 1 to 11 (MMDSEAHEKRP) the composition is skewed to basic and acidic residues. Positions 1 to 21 (MMDSEAHEKRPPMLTSSNQDL) are disordered. 3 Solcar repeats span residues 28–108 (VGDM…LSRL), 117–201 (PEFA…IKES), and 214–297 (NDFI…LLKI). A run of 6 helical transmembrane segments spans residues 36–56 (CGYC…KILF), 85–105 (LPPL…YEDL), 119–139 (FATR…LTPF), 180–200 (ILFR…PIKE), 216–236 (FICG…INVV), and 269–290 (LFRG…INAT).

This sequence belongs to the mitochondrial carrier (TC 2.A.29) family.

Its subcellular location is the mitochondrion inner membrane. The enzyme catalyses NAD(+)(in) = NAD(+)(out). Its function is as follows. Mitochondrial membrane carrier protein that mediates the import of NAD(+) into mitochondria. Mitochondrial NAD(+) is required for glycolysis and mitochondrial respiration. Compared to SLC25A52, SLC25A51-mediated transport is essential for the import of NAD(+) in mitochondria. The transport mechanism, uniport or antiport, its electrogenicity and substrate selectivity, remain to be elucidated. The polypeptide is Mitochondrial nicotinamide adenine dinucleotide transporter SLC25A51 (Mus musculus (Mouse)).